A 931-amino-acid polypeptide reads, in one-letter code: Valine--tRNA ligase (931 aa).

A 'HIGH' region motif is present at residues 43-53 (PNVTGALHIGH). Positions 351–370 (IPHTDKDGNAHDAEPRTIQT) are disordered. Residues 353-365 (HTDKDGNAHDAEP) show a composition bias toward basic and acidic residues. The 'KMSKS' region motif lies at 552 to 556 (KMSKS). Residue Lys555 participates in ATP binding. A disordered region spans residues 691 to 717 (LQGRGLGEGDEAVPAPADGPLSPALSP). A coiled-coil region spans residues 864-930 (VIDIAAERER…DRLSAALARL (67 aa)).

Belongs to the class-I aminoacyl-tRNA synthetase family. ValS type 1 subfamily. In terms of assembly, monomer.

The protein resides in the cytoplasm. It catalyses the reaction tRNA(Val) + L-valine + ATP = L-valyl-tRNA(Val) + AMP + diphosphate. Functionally, catalyzes the attachment of valine to tRNA(Val). As ValRS can inadvertently accommodate and process structurally similar amino acids such as threonine, to avoid such errors, it has a 'posttransfer' editing activity that hydrolyzes mischarged Thr-tRNA(Val) in a tRNA-dependent manner. This Sphingopyxis alaskensis (strain DSM 13593 / LMG 18877 / RB2256) (Sphingomonas alaskensis) protein is Valine--tRNA ligase.